The chain runs to 452 residues: MINVTLKQIQSWIPCEIEDQFLNQEINGVTIDSRAISKNMLFIPFKGENVDGHRFVSKALQDGAGAAFYQRGTPIDENVSGPIIWVEDTLTALQQLAQAYLRHVNPKVIAVTGSNGKTTTKDMIESVLHTEFKVKKTQGNYNNEIGLPLTILELDNDTEISILEMGMSGFHEIEFLSNLAQPDIAVITNIGESHMQDLGSREGIAKAKSEITIGLKDNGTFIYDGDEPLLKPHVKEVENAKCISIGVATDNALVCSVDDRDTTGISFTINNKEHYDLPILGKHNMKNATIAIAVGHELGLTYNTIYQNLKNVSLTGMRMEQHTLENDITVINDAYNASPTSMRAAIDTLSTLTGRRILILGDVLELGENSKEMHIGVGNYLEEKHIDVLYTFGNEAKYIYDSGQQHVEKAQHFNSKDDMIEVLINDLKAHDRVLVKGSRGMKLEEVVNALIS.

113–119 lines the ATP pocket; sequence GSNGKTT.

This sequence belongs to the MurCDEF family. MurF subfamily.

It is found in the cytoplasm. The catalysed reaction is UDP-N-acetyl-alpha-D-muramoyl-L-alanyl-gamma-D-glutamyl-L-lysine + D-alanyl-D-alanine + ATP = UDP-N-acetyl-alpha-D-muramoyl-L-alanyl-gamma-D-glutamyl-L-lysyl-D-alanyl-D-alanine + ADP + phosphate + H(+). It participates in cell wall biogenesis; peptidoglycan biosynthesis. In terms of biological role, involved in cell wall formation. Catalyzes the final step in the synthesis of UDP-N-acetylmuramoyl-pentapeptide, the precursor of murein. Catalyzes the addition of D-alanyl-D-alanine to UDP-MurNAc-L-alanyl-gamma-D-glutamyl-L-lysine. In vitro, can also use the mesodiaminopimelic acid-containing form of UDP-MurNAc-tripeptide, with the same efficiency, revealing that the discrimination for the amino acid residue at the third position of the peptide in the peptidoglycans is entirely supported by MurE. This Staphylococcus aureus (strain NCTC 8325 / PS 47) protein is UDP-N-acetylmuramoyl-tripeptide--D-alanyl-D-alanine ligase.